A 336-amino-acid polypeptide reads, in one-letter code: Aspartate--ammonia ligase (336 aa).

It belongs to the class-II aminoacyl-tRNA synthetase family. AsnA subfamily.

The protein localises to the cytoplasm. The enzyme catalyses L-aspartate + NH4(+) + ATP = L-asparagine + AMP + diphosphate + H(+). The protein operates within amino-acid biosynthesis; L-asparagine biosynthesis; L-asparagine from L-aspartate (ammonia route): step 1/1. This chain is Aspartate--ammonia ligase, found in Clostridium perfringens (strain ATCC 13124 / DSM 756 / JCM 1290 / NCIMB 6125 / NCTC 8237 / Type A).